We begin with the raw amino-acid sequence, 445 residues long: Methionine aminopeptidase 2-1 (445 aa).

The disordered stretch occupies residues 1 to 99; it reads MAAQVPTEAL…FPNKAYPKGE (99 aa). The span at 61–75 shows a compositional bias: basic residues; the sequence is KKKKKRKPKKKKKHP. Histidine 198 is a substrate binding site. Aspartate 218, aspartate 229, and histidine 298 together coordinate a divalent metal cation. Residue histidine 306 participates in substrate binding. 2 residues coordinate a divalent metal cation: glutamate 331 and glutamate 426.

Belongs to the peptidase M24A family. Methionine aminopeptidase eukaryotic type 2 subfamily. It depends on Co(2+) as a cofactor. The cofactor is Zn(2+). Mn(2+) serves as cofactor. Fe(2+) is required as a cofactor.

It localises to the cytoplasm. It catalyses the reaction Release of N-terminal amino acids, preferentially methionine, from peptides and arylamides.. In terms of biological role, cotranslationally removes the N-terminal methionine from nascent proteins. The N-terminal methionine is often cleaved when the second residue in the primary sequence is small and uncharged (Met-Ala-, Cys, Gly, Pro, Ser, Thr, or Val). The chain is Methionine aminopeptidase 2-1 from Fusarium vanettenii (strain ATCC MYA-4622 / CBS 123669 / FGSC 9596 / NRRL 45880 / 77-13-4) (Fusarium solani subsp. pisi).